The sequence spans 89 residues: Small ribosomal subunit protein uS15 (89 aa).

Belongs to the universal ribosomal protein uS15 family. Part of the 30S ribosomal subunit. Forms a bridge to the 50S subunit in the 70S ribosome, contacting the 23S rRNA.

In terms of biological role, one of the primary rRNA binding proteins, it binds directly to 16S rRNA where it helps nucleate assembly of the platform of the 30S subunit by binding and bridging several RNA helices of the 16S rRNA. Functionally, forms an intersubunit bridge (bridge B4) with the 23S rRNA of the 50S subunit in the ribosome. This chain is Small ribosomal subunit protein uS15, found in Chlamydia pneumoniae (Chlamydophila pneumoniae).